A 486-amino-acid polypeptide reads, in one-letter code: MSSRLSGLLDRAAGKRVLCIGDVMLDRFIYGVVDRISPEAPVPVLRHSREASMPGGAANVARNLASLGLEPVLIGACGDDDAGRELLSIFDQDLSLSVRLVTAKGRPTTLKCRFVAGGHQLLRVDTENVAPVSEATEEELIGILSREAPGSAAILISDYAKGLLTDRLLKAVTKLAADLNIPLIADPKGRDFARYGAVDILKPNAFELSAAVHRSISTDEEAALALREALDTLPAKAIIVTRAARGISYIGQDGNVHHEAGRAREVFDVSGAGDTSLAALATAIAGGGTLSDAVHLAIAASGIAVGKAGTATVSAEEIKAALSVAGPVGRAGLLPMDAMIGQVERWRAAGLKIGFTNGCFDILHPGHIRVIEQARAHCDRLVVGLNSDNSVKRLKGPLRPINNEQARADVLSALSAVDGVIIFDTDTPLDAIAALNPDVLVKGGDYTRESIVGADIVEARGGEIVIVPLVAGHSTTAIIARSETGK.

A ribokinase region spans residues 1–329; the sequence is MSSRLSGLLD…AALSVAGPVG (329 aa). 204–207 is a binding site for ATP; sequence NAFE. Asp274 is an active-site residue. The interval 355–486 is cytidylyltransferase; that stretch reads FTNGCFDILH…AIIARSETGK (132 aa).

It in the N-terminal section; belongs to the carbohydrate kinase PfkB family. In the C-terminal section; belongs to the cytidylyltransferase family. As to quaternary structure, homodimer.

The catalysed reaction is D-glycero-beta-D-manno-heptose 7-phosphate + ATP = D-glycero-beta-D-manno-heptose 1,7-bisphosphate + ADP + H(+). It carries out the reaction D-glycero-beta-D-manno-heptose 1-phosphate + ATP + H(+) = ADP-D-glycero-beta-D-manno-heptose + diphosphate. Its pathway is nucleotide-sugar biosynthesis; ADP-L-glycero-beta-D-manno-heptose biosynthesis; ADP-L-glycero-beta-D-manno-heptose from D-glycero-beta-D-manno-heptose 7-phosphate: step 1/4. The protein operates within nucleotide-sugar biosynthesis; ADP-L-glycero-beta-D-manno-heptose biosynthesis; ADP-L-glycero-beta-D-manno-heptose from D-glycero-beta-D-manno-heptose 7-phosphate: step 3/4. Functionally, catalyzes the phosphorylation of D-glycero-D-manno-heptose 7-phosphate at the C-1 position to selectively form D-glycero-beta-D-manno-heptose-1,7-bisphosphate. Its function is as follows. Catalyzes the ADP transfer from ATP to D-glycero-beta-D-manno-heptose 1-phosphate, yielding ADP-D-glycero-beta-D-manno-heptose. In Hyphomonas neptunium (strain ATCC 15444), this protein is Bifunctional protein HldE.